We begin with the raw amino-acid sequence, 328 residues long: Tryptophan--tRNA ligase (328 aa).

ATP-binding positions include 10 to 12 (QAT) and 18 to 19 (GN). The 'HIGH' region motif lies at 11–19 (ATGSLHLGN). Aspartate 134 is an L-tryptophan binding site. ATP-binding positions include 146–148 (GED), isoleucine 186, and 195–199 (KMSKS). The 'KMSKS' region motif lies at 195-199 (KMSKS).

The protein belongs to the class-I aminoacyl-tRNA synthetase family. Homodimer.

The protein localises to the cytoplasm. It carries out the reaction tRNA(Trp) + L-tryptophan + ATP = L-tryptophyl-tRNA(Trp) + AMP + diphosphate + H(+). Its function is as follows. Catalyzes the attachment of tryptophan to tRNA(Trp). The sequence is that of Tryptophan--tRNA ligase from Rickettsia bellii (strain RML369-C).